The sequence spans 93 residues: uncharacterized protein (93 aa).

Positions 1–22 (MSIPNLSSVTQLLSIATGLVST) are cleaved as a signal peptide. N-linked (GlcNAc...) asparagine; by host glycosylation is present at Asn5.

This is an uncharacterized protein from Invertebrate iridescent virus 6 (IIV-6).